The sequence spans 287 residues: Energy-coupling factor transporter ATP-binding protein EcfA1 (287 aa).

The ABC transporter domain maps to 6-248; the sequence is IVAEGVSYAY…ADRIRALRLD (243 aa). Residue 47–54 participates in ATP binding; sequence GMNGSGKS.

It belongs to the ABC transporter superfamily. Energy-coupling factor EcfA family. Forms a stable energy-coupling factor (ECF) transporter complex composed of 2 membrane-embedded substrate-binding proteins (S component), 2 ATP-binding proteins (A component) and 2 transmembrane proteins (T component).

The protein localises to the cell membrane. Its function is as follows. ATP-binding (A) component of a common energy-coupling factor (ECF) ABC-transporter complex. Unlike classic ABC transporters this ECF transporter provides the energy necessary to transport a number of different substrates. The chain is Energy-coupling factor transporter ATP-binding protein EcfA1 from Symbiobacterium thermophilum (strain DSM 24528 / JCM 14929 / IAM 14863 / T).